The chain runs to 452 residues: Plasminogen-binding protein PgbA (452 aa).

The disordered stretch occupies residues 265–452; sequence QEAIKEPKKA…RRKALEAGKK (188 aa). Basic and acidic residues-rich tracts occupy residues 284–310 and 317–373; these read LEEKNYQKAERKLDAKEERRYLRDERK and KAME…KEPS. Polar residues predominate over residues 374–391; the sequence is DGNNATQQGEKQNAPKEN. A compositionally biased stretch (basic and acidic residues) spans 392-452; sequence NAQKEENKPN…RRKALEAGKK (61 aa).

It localises to the cell surface. Its function is as follows. Binds plasminogen, specifically, and in a concentration and lysine-dependent manner. Plasminogen is the precursor of plasmin, a serine protease that cleaves fibrin, fibronectin, laminin and vitronectin. Acquisition of plasminogen/plasmin could enable H.pylori to degrade host components. The sequence is that of Plasminogen-binding protein PgbA (pgbA) from Helicobacter pylori (strain ATCC 700392 / 26695) (Campylobacter pylori).